Here is a 568-residue protein sequence, read N- to C-terminus: Periplasmic trehalase (568 aa).

Residues 1–39 (MPHVVARSGDVMSSAAPPSCTSLLGLSLSMFVAPCTLTA) form the signal peptide. Substrate-binding positions include arginine 169, 176 to 177 (WD), asparagine 213, 222 to 224 (RSQ), 294 to 296 (RPE), and glycine 327. Active-site proton donor/acceptor residues include aspartate 329 and glutamate 511. A substrate-binding site is contributed by glutamate 526.

The protein belongs to the glycosyl hydrolase 37 family.

It localises to the periplasm. The catalysed reaction is alpha,alpha-trehalose + H2O = alpha-D-glucose + beta-D-glucose. Provides the cells with the ability to utilize trehalose at high osmolarity by splitting it into glucose molecules that can subsequently be taken up by the phosphotransferase-mediated uptake system. The sequence is that of Periplasmic trehalase from Xanthomonas oryzae pv. oryzae (strain MAFF 311018).